The following is a 787-amino-acid chain: MNQKTLKALEYDKIVEILKNMAKSTPAKEYFENLIPSTNVADIENELNKVDESYRYVLKYGNLPTLEFENILPSLKKSKLGATLNPHEILQIGKVLKLSYEMRTYLSFTQDFSFLESMKKRLVNLKEVISRIDQTFLTPDEILDTASSKLKEIRDKIRKLENKIRDELNSMIRDPKIQRFLQEPIITIRGEKLLLPVKAEFRNEVKGIVHDQSATGATLFVEPFVCVEISNQIKILKNQEKEEIERILQEISSLIASYCEVIETSFYALVELDIVFTKAIWAKEMNASKPIINASGIINLKKARHPLIQKDKVVPIDIHLGKDFDVLIITGPNTGGKTVTLKTVGLFCLLCQSGIFIPADEGSELCIFQKIFADIGDDQSIVQSLSTFSAHMKNIIEITKNADDKTLVLLDEIGAGTDPEEGAALAKAILKYLSEKGSKVIATTHYGELKIFAQQEDRFENASCEFDVKTLKPTYRLLIGIPGRSNALVISSNLGLDKGIVEMARGYLSQKTIDLDRIINEMEQKRKEAEENLELAQKLKHEAQALKAAYEEEKKRFETERERIRKKAINEAKEIVESSQYEIENLFKDLRKLAENLKEKEVLKELEEKKREYERLIQSISQQVKQEAESKTKKTIQNLRLGQKVYVRSFDAEGFVESLPDSKGNLTVQIGIMKINVNLSDIEEVEGQDSKIYQIASRNVIIKEKNIDMSIDVRGKTSDDAILEVDKYLDDAYTAGLKQVTIIHGKGTGVLRQAIRNFLRRHPHVKSFRDGTYGEGEQGVTVVELKD.

An ATP-binding site is contributed by 331-338 (GPNTGGKT). Positions 711 to 786 (IDVRGKTSDD…EQGVTVVELK (76 aa)) constitute a Smr domain.

Belongs to the DNA mismatch repair MutS family. MutS2 subfamily. As to quaternary structure, homodimer. Binds to stalled ribosomes, contacting rRNA.

Functionally, endonuclease that is involved in the suppression of homologous recombination and thus may have a key role in the control of bacterial genetic diversity. In terms of biological role, acts as a ribosome collision sensor, splitting the ribosome into its 2 subunits. Detects stalled/collided 70S ribosomes which it binds and splits by an ATP-hydrolysis driven conformational change. Acts upstream of the ribosome quality control system (RQC), a ribosome-associated complex that mediates the extraction of incompletely synthesized nascent chains from stalled ribosomes and their subsequent degradation. Probably generates substrates for RQC. This is Endonuclease MutS2 from Caldicellulosiruptor bescii (strain ATCC BAA-1888 / DSM 6725 / KCTC 15123 / Z-1320) (Anaerocellum thermophilum).